Here is a 656-residue protein sequence, read N- to C-terminus: ATP-dependent zinc metalloprotease FtsH (656 aa).

At 1–45 the chain is on the cytoplasmic side; sequence MAIFARRIGLNQHSAYGSRQRVIVMKNFGKKALIKQQSPKRVAWT. The chain crosses the membrane as a helical span at residues 46–66; it reads GALAASLIMLPTMFGGNPVLA. Over 67 to 147 the chain is Lumenal; it reads QKAERESLSY…EISSANSRAA (81 aa). The chain crosses the membrane as a helical span at residues 148–168; the sequence is VGLLINLMWILPLVALMLLFL. Residues 169–656 lie on the Cytoplasmic side of the membrane; the sequence is RRSTNASSQA…DEQLSMVNSQ (488 aa). 239–246 is an ATP binding site; that stretch reads GPPGTGKT. Position 460 (histidine 460) interacts with Zn(2+). Glutamate 461 is a catalytic residue. Histidine 464 and aspartate 538 together coordinate Zn(2+).

The protein in the central section; belongs to the AAA ATPase family. In the C-terminal section; belongs to the peptidase M41 family. As to quaternary structure, homohexamer. Requires Zn(2+) as cofactor.

Its subcellular location is the cellular thylakoid membrane. In terms of biological role, acts as a processive, ATP-dependent zinc metallopeptidase for both cytoplasmic and membrane proteins. Plays a role in the quality control of integral membrane proteins. This is ATP-dependent zinc metalloprotease FtsH from Nostoc sp. (strain PCC 7120 / SAG 25.82 / UTEX 2576).